Reading from the N-terminus, the 476-residue chain is Protein transport protein Sec61 subunit alpha (476 aa).

Over 2-33 (GIKFLEFIKPFCAVLPEIQKPERKIQFREKVL) the chain is Cytoplasmic. Residues 34 to 53 (WTAITLFIFLVCCQIPLFGI) form a helical membrane-spanning segment. Residues 54–76 (MSSDSADPFYWMRVILASNRGTL) lie on the Lumenal side of the membrane. A helical membrane pass occupies residues 77 to 96 (MELGIAPIVTSGLIMQLLAG). Topologically, residues 97–117 (AKIIEVGDTPKDRALFNGAQK) are cytoplasmic. A helical membrane pass occupies residues 118 to 138 (LFGMIITIGQAIVYVMTGMYG). Over 139–144 (DPSEMG) the chain is Lumenal. Residues 145 to 165 (AGICLLIIIQLFVAGLIVLLL) form a helical membrane-spanning segment. The Cytoplasmic segment spans residues 166 to 172 (DELLQKG). The chain crosses the membrane as a helical span at residues 173 to 193 (YGLGSGISLFIATNICETIVW). At 194–240 (KAFGPTTVNTGRGTEFEGAIIALFHLLATRTDKVRALREAFYRQNLP) the chain is on the lumenal side. A helical transmembrane segment spans residues 241–261 (NLMNLIATVFVFAVVIYFQGF). Residues 262 to 288 (RVDLPIKSARYRGQYNTYPIKLFYTSN) lie on the Cytoplasmic side of the membrane. Residues 289-309 (IPIILQSALVSNLYVISQMLS) form a helical membrane-spanning segment. Topologically, residues 310–354 (TRFSGNFLVNLLGTWSDATTSGPARAYPVAGLCYYLSPPESFGSV) are lumenal. Residues 355–375 (LDDPVHAVIYIVFMLGSCAFF) form a helical membrane-spanning segment. The Cytoplasmic portion of the chain corresponds to 376 to 420 (SKTWIEVSGSSAKDVAKQLKEQQMVMRGHRETSMVHELNRYIPTA). Residues 421 to 441 (AAFGGLCIGGLSVMADFLGAI) form a helical membrane-spanning segment. The Lumenal segment spans residues 442–445 (GSGT). A helical transmembrane segment spans residues 446–462 (GILLAVTIIYQYFEIFV). The Cytoplasmic segment spans residues 463 to 476 (KEQSEVGSMGALLF).

It belongs to the SecY/SEC61-alpha family. The SEC61 channel-forming translocon complex consists of channel-forming core components SEC61A1, SEC61B and SEC61G and different auxiliary components such as SEC62 and SEC63. The SEC61 channel associates with the multi-pass translocon (MPT) complex.

The protein localises to the endoplasmic reticulum membrane. Its function is as follows. Component of SEC61 channel-forming translocon complex that mediates transport of signal peptide-containing precursor polypeptides across the endoplasmic reticulum (ER). Forms a ribosome receptor and a gated pore in the ER membrane, both functions required for cotranslational translocation of nascent polypeptides. May cooperate with auxiliary protein SEC62, SEC63 and HSPA5/BiP to enable post-translational transport of small presecretory proteins. The SEC61 channel is also involved in ER membrane insertion of transmembrane proteins: it mediates membrane insertion of the first few transmembrane segments of proteins, while insertion of subsequent transmembrane regions of multi-pass membrane proteins is mediated by the multi-pass translocon (MPT) complex. This Bovichtus variegatus (Thornfish) protein is Protein transport protein Sec61 subunit alpha (sec61a).